A 154-amino-acid polypeptide reads, in one-letter code: 6,7-dimethyl-8-ribityllumazine synthase (154 aa).

5-amino-6-(D-ribitylamino)uracil-binding positions include Phe22, 56 to 58, and 81 to 83; these read SFE and VLI. 86-87 lines the (2S)-2-hydroxy-3-oxobutyl phosphate pocket; the sequence is ET. Residue His89 is the Proton donor of the active site. A 5-amino-6-(D-ribitylamino)uracil-binding site is contributed by Phe114. Arg128 provides a ligand contact to (2S)-2-hydroxy-3-oxobutyl phosphate.

The protein belongs to the DMRL synthase family.

It catalyses the reaction (2S)-2-hydroxy-3-oxobutyl phosphate + 5-amino-6-(D-ribitylamino)uracil = 6,7-dimethyl-8-(1-D-ribityl)lumazine + phosphate + 2 H2O + H(+). The protein operates within cofactor biosynthesis; riboflavin biosynthesis; riboflavin from 2-hydroxy-3-oxobutyl phosphate and 5-amino-6-(D-ribitylamino)uracil: step 1/2. In terms of biological role, catalyzes the formation of 6,7-dimethyl-8-ribityllumazine by condensation of 5-amino-6-(D-ribitylamino)uracil with 3,4-dihydroxy-2-butanone 4-phosphate. This is the penultimate step in the biosynthesis of riboflavin. In Chlamydia caviae (strain ATCC VR-813 / DSM 19441 / 03DC25 / GPIC) (Chlamydophila caviae), this protein is 6,7-dimethyl-8-ribityllumazine synthase.